The chain runs to 332 residues: Phosphoribosylformylglycinamidine cyclo-ligase (332 aa).

It belongs to the AIR synthase family.

The protein resides in the cytoplasm. The enzyme catalyses 2-formamido-N(1)-(5-O-phospho-beta-D-ribosyl)acetamidine + ATP = 5-amino-1-(5-phospho-beta-D-ribosyl)imidazole + ADP + phosphate + H(+). It functions in the pathway purine metabolism; IMP biosynthesis via de novo pathway; 5-amino-1-(5-phospho-D-ribosyl)imidazole from N(2)-formyl-N(1)-(5-phospho-D-ribosyl)glycinamide: step 2/2. The polypeptide is Phosphoribosylformylglycinamidine cyclo-ligase (Clostridium acetobutylicum (strain ATCC 824 / DSM 792 / JCM 1419 / IAM 19013 / LMG 5710 / NBRC 13948 / NRRL B-527 / VKM B-1787 / 2291 / W)).